Here is a 396-residue protein sequence, read N- to C-terminus: Argininosuccinate synthase (396 aa).

9–17 is a binding site for ATP; that stretch reads AFSGGLDTT. Tyr-86 serves as a coordination point for L-citrulline. Residue Gly-116 coordinates ATP. L-aspartate contacts are provided by Thr-118, Asn-122, and Asp-123. Asn-122 is an L-citrulline binding site. Residues Arg-126, Ser-172, Ser-181, Glu-254, and Tyr-266 each coordinate L-citrulline.

It belongs to the argininosuccinate synthase family. Type 1 subfamily. As to quaternary structure, homotetramer.

Its subcellular location is the cytoplasm. It carries out the reaction L-citrulline + L-aspartate + ATP = 2-(N(omega)-L-arginino)succinate + AMP + diphosphate + H(+). It functions in the pathway amino-acid biosynthesis; L-arginine biosynthesis; L-arginine from L-ornithine and carbamoyl phosphate: step 2/3. The chain is Argininosuccinate synthase from Halobacterium salinarum (strain ATCC 700922 / JCM 11081 / NRC-1) (Halobacterium halobium).